Here is a 208-residue protein sequence, read N- to C-terminus: Small ribosomal subunit protein uS4 (208 aa).

An S4 RNA-binding domain is found at 98-160; that stretch reads RRIDNTVYRL…SRQLQMINEA (63 aa).

The protein belongs to the universal ribosomal protein uS4 family. Part of the 30S ribosomal subunit. Contacts protein S5. The interaction surface between S4 and S5 is involved in control of translational fidelity.

Its function is as follows. One of the primary rRNA binding proteins, it binds directly to 16S rRNA where it nucleates assembly of the body of the 30S subunit. In terms of biological role, with S5 and S12 plays an important role in translational accuracy. The polypeptide is Small ribosomal subunit protein uS4 (Syntrophobacter fumaroxidans (strain DSM 10017 / MPOB)).